A 362-amino-acid polypeptide reads, in one-letter code: Aminomethyltransferase (362 aa).

The protein belongs to the GcvT family. The glycine cleavage system is composed of four proteins: P, T, L and H.

The catalysed reaction is N(6)-[(R)-S(8)-aminomethyldihydrolipoyl]-L-lysyl-[protein] + (6S)-5,6,7,8-tetrahydrofolate = N(6)-[(R)-dihydrolipoyl]-L-lysyl-[protein] + (6R)-5,10-methylene-5,6,7,8-tetrahydrofolate + NH4(+). Functionally, the glycine cleavage system catalyzes the degradation of glycine. The sequence is that of Aminomethyltransferase from Listeria monocytogenes serotype 4a (strain HCC23).